The primary structure comprises 74 residues: Antimicrobial peptide ToAp1 (74 aa).

Positions 1 to 22 (MQMKYLIPIFFLVLIVADHCHA) are cleaved as a signal peptide. A Lysine amide modification is found at K39. Residues 40–74 (GRRKRDITAQIEQYRNIQKREAAELEELLANLPVY) constitute a propeptide that is removed on maturation.

It belongs to the non-disulfide-bridged peptide (NDBP) superfamily. Short antimicrobial peptide (group 4) family. Expressed by the venom gland.

It is found in the secreted. Its function is as follows. Antimicrobial peptide. Is able to kill Mycobacterium abscessus subsp. massiliense in a dose-dependent manner. Has antifungal activity against Candida spp. and one Cryptococcus neoformans strains with MICs values ranging from 12.5 to 200 uM. Also shows an inhibitory activity on C.albicans biofilms at high concentrations. Shows low cytotoxic activity and has weak hemolytic activity on human erythrocytes. Shows anti-inflammatory activities, since it decreases release of pro-inflammatory cytokines, and increases release of anti-inflammatory cytokines. Acts by blocking the Toll-like receptor 4 (TLR4). In addition, decreases the expression of costimulatory molecules such as CD80 and CD86 in LPS-stimulated cells. In vivo, does not induce immune cell migration. Helical wheel projections predict an amphipathic peptide with distinct hydrophobic and hydrophilic faces. The polypeptide is Antimicrobial peptide ToAp1 (Tityus obscurus (Amazonian scorpion)).